Here is a 326-residue protein sequence, read N- to C-terminus: MSDLQAAEGPGSWSPTARPGSAGGVGDCQGVEGSQAAASENEDLENNKDTSLLASATDPEPCSPPHRPQMVSPGSKDATEDLRKATGALEAQALVKQDLLPADQAQVLNEMAKYQVPQRSGDIVMIQSEHTGAIDVLSADLESADLLGDHRKVSPPLMAPPCIWTFAKVKEFKSKLGKEKNSRLVVKRGEVVTIRVPTHPEGKRVCWEFATDDYDIGFGVYFDWTPVTSTDITVQVSDSCDDEDEEEEEEEEIEEPVPAGDVERGSRSSLRGRYGEVMPVYRRDSHRDVQAGSHDYPGEGIYLLKFDNSYSLLRNKTLYFHIYYTS.

The disordered stretch occupies residues 1 to 80; that stretch reads MSDLQAAEGP…VSPGSKDATE (80 aa). A GOLD domain is found at 160–324; that stretch reads PPCIWTFAKV…NKTLYFHIYY (165 aa). Residue Lys170 is modified to N6-acetyllysine. A disordered region spans residues 238-268; the sequence is DSCDDEDEEEEEEEEIEEPVPAGDVERGSRS. Residues 239-255 show a composition bias toward acidic residues; that stretch reads SCDDEDEEEEEEEEIEE.

The protein is Protein TMED8 (TMED8) of Pongo abelii (Sumatran orangutan).